We begin with the raw amino-acid sequence, 301 residues long: Sulfate adenylyltransferase subunit 2 (301 aa).

The protein belongs to the PAPS reductase family. CysD subfamily. As to quaternary structure, heterodimer composed of CysD, the smaller subunit, and CysN.

It carries out the reaction sulfate + ATP + H(+) = adenosine 5'-phosphosulfate + diphosphate. The protein operates within sulfur metabolism; hydrogen sulfide biosynthesis; sulfite from sulfate: step 1/3. In terms of biological role, with CysN forms the ATP sulfurylase (ATPS) that catalyzes the adenylation of sulfate producing adenosine 5'-phosphosulfate (APS) and diphosphate, the first enzymatic step in sulfur assimilation pathway. APS synthesis involves the formation of a high-energy phosphoric-sulfuric acid anhydride bond driven by GTP hydrolysis by CysN coupled to ATP hydrolysis by CysD. The protein is Sulfate adenylyltransferase subunit 2 of Trichlorobacter lovleyi (strain ATCC BAA-1151 / DSM 17278 / SZ) (Geobacter lovleyi).